Reading from the N-terminus, the 456-residue chain is Arginine biosynthesis bifunctional protein ArgJ, mitochondrial (456 aa).

Residues threonine 184, lysine 213, threonine 224, glutamate 311, asparagine 451, and threonine 456 each contribute to the substrate site. The active-site Nucleophile is threonine 224.

The protein belongs to the ArgJ family. Heterodimer of an alpha and a beta chain. The alpha and beta chains are autoproteolytically processed from a single precursor protein within the mitochondrion.

The protein resides in the mitochondrion matrix. It carries out the reaction N(2)-acetyl-L-ornithine + L-glutamate = N-acetyl-L-glutamate + L-ornithine. The catalysed reaction is L-glutamate + acetyl-CoA = N-acetyl-L-glutamate + CoA + H(+). It participates in amino-acid biosynthesis; L-arginine biosynthesis; L-ornithine and N-acetyl-L-glutamate from L-glutamate and N(2)-acetyl-L-ornithine (cyclic): step 1/1. The protein operates within amino-acid biosynthesis; L-arginine biosynthesis; N(2)-acetyl-L-ornithine from L-glutamate: step 1/4. Catalyzes two activities which are involved in the cyclic version of arginine biosynthesis: the synthesis of acetylglutamate from glutamate and acetyl-CoA, and of ornithine by transacetylation between acetylornithine and glutamate. In Aspergillus oryzae (strain ATCC 42149 / RIB 40) (Yellow koji mold), this protein is Arginine biosynthesis bifunctional protein ArgJ, mitochondrial.